Here is a 104-residue protein sequence, read N- to C-terminus: Thioredoxin 1 (104 aa).

One can recognise a Thioredoxin domain in the interval 2–104 (VKIVTSQAEF…LKQLIEKYAA (103 aa)). Catalysis depends on nucleophile residues Cys30 and Cys33. Cys30 and Cys33 are oxidised to a cystine.

The protein belongs to the thioredoxin family. The disulfide bond between Cys-30 and Cys-33 acts as a redox-active center and is reduced by thioredoxin reductase TRXR.

It is found in the cytoplasm. Its function is as follows. Participates in various redox reactions through the reversible oxidation of its active center dithiol to a disulfide and catalyzes dithiol-disulfide exchange reactions. By modifying the redox status of targeted proteins, induces changes in their structure and activity. Reduces oxidized glutathione (GSSG), thereby acting as a backup for the glutathione redox system. Reduces nitroglutathione (GSNO), a compound involved in the transport of nitric oxide (NO). Also reduces oxidative stress by detoxifying hydrogen peroxide, tert-butyl hydroperoxide and cumene hydroperoxide. Activates ornithine aminotransferase OAT by reducing a disulfide bond in the substrate binding loop, thereby enhancing the affinity of OAT for its substrates. May reduce S-adenosyl-L-homocysteine hydrolase SAHH. This Plasmodium falciparum (isolate 3D7) protein is Thioredoxin 1.